A 342-amino-acid polypeptide reads, in one-letter code: Probable alcohol acetyltransferase (342 aa).

Residues 1-38 (MMILGKAGILAQYGTIYVRQNTIRNNLSSCIFKQSLCA) constitute a mitochondrion transit peptide. The propeptide at 39–46 (FHSLAKVL) is removed in mature form. One can recognise an AB hydrolase-1 domain in the interval 75–326 (PPIIILHGLF…AGHWVNAEKP (252 aa)). Active-site charge relay system residues include Ser152 and His319.

The protein belongs to the AB hydrolase superfamily. Processed by both the mitochondrial processing peptidase (MPP) and the mitochondrial octapeptidyl aminopeptidase (OCT1).

The protein resides in the mitochondrion. Its function is as follows. Probable alcohol acetyltransferase that uses acetyl-CoA to synthesize acetate esters from various alcohols. Not involved in the synthesis of ethyl acetate. The chain is Probable alcohol acetyltransferase (IMO32) from Saccharomyces cerevisiae (strain ATCC 204508 / S288c) (Baker's yeast).